We begin with the raw amino-acid sequence, 182 residues long: Interferon beta (182 aa).

An N-terminal signal peptide occupies residues 1-21 (MNNRWILHAAFLLCFSTTALS). Tyr-24 is modified (phosphotyrosine). N-linked (GlcNAc...) asparagine glycans are attached at residues Asn-50, Asn-90, and Asn-97.

The protein belongs to the alpha/beta interferon family. In terms of assembly, monomer. This beta interferon does not have a disulfide bond.

It is found in the secreted. In terms of biological role, type I interferon cytokine that plays a key role in the innate immune response to infection, developing tumors and other inflammatory stimuli. Signals via binding to high-affinity (IFNAR2) and low-affinity (IFNAR1) heterodimeric receptor, activating the canonical Jak-STAT signaling pathway resulting in transcriptional activation or repression of interferon-regulated genes that encode the effectors of the interferon response, such as antiviral proteins, regulators of cell proliferation and differentiation, and immunoregulatory proteins. Signals mostly via binding to a IFNAR1-IFNAR2 heterodimeric receptor, but can also function with IFNAR1 alone and independently of Jak-STAT pathways. Elicits a wide variety of responses, including antiviral and antibacterial activities, and can regulate the development of B-cells, myelopoiesis and lipopolysaccharide (LPS)-inducible production of tumor necrosis factor. Plays a role in neuronal homeostasis by regulating dopamine turnover and protecting dopaminergic neurons: acts by promoting neuronal autophagy and alpha-synuclein clearance, thereby preventing dopaminergic neuron loss. IFNB1 is more potent than interferon-alpha (IFN-alpha) in inducing the apoptotic and antiproliferative pathways required for control of tumor cell growth. This is Interferon beta from Mus musculus (Mouse).